The following is a 567-amino-acid chain: MSRISRQAYADMFGPTVGDRVRLADTALWVEVEKDFTVYGEEVKFGGGKVIRDGMGQGQMLAAEAMDLVLTNALIIDHWGIVKADIGIKHGRIAVIGKAGNPDVQPGVNVPVGPGTEVIAAEGKIVTAGGVDSHIHFICPQQVDEALNSGVTTFIGGGTGPATGTNATTCTPGPWYLARMLQAADSLPINIGLLGKGNASRPEALREQIAAGAVGLKLHEDWGSTPAAIDCCLGVAEEMDIQVAIHTDTLNESGCIEDTLAAIGDRTIHTFHTEGAGGGHAPDIIRAAGQANVLPSSTNPTLPYTINTVDEHLDMLMVCHHLDPSIAEDVAFAESRIRRETIAAEDILHDMGAFAMTSSDSQAMGRVGEVVLRTWQVAHQMKLRRGPLAPDTYYSDNFRVKRYIAKYTINPALTHGIGHEVGSVEVGKLADLVLWSPAFFAVKPALVLKGGMIVTAPMGDINGSIPTPQPVHYRPMFGALGAARHATRMTFLPQAAMDRGLAEELNLRSLIGVVNGCRRVRKPDMVHNTLQPLIEVDAQTYQVRADGELLVCEPASELPLAQRYFLF.

Residues histidine 134, histidine 136, and lysine 217 each coordinate Ni(2+). Lysine 217 bears the N6-carboxylysine mark. Residue histidine 219 participates in substrate binding. 2 residues coordinate Ni(2+): histidine 246 and histidine 272. The Proton donor role is filled by histidine 320. Aspartate 360 serves as a coordination point for Ni(2+).

The protein belongs to the metallo-dependent hydrolases superfamily. Urease alpha subunit family. As to quaternary structure, heterotrimer of UreA (gamma), UreB (beta) and UreC (alpha) subunits. Three heterotrimers associate to form the active enzyme. Ni cation serves as cofactor. Carboxylation allows a single lysine to coordinate two nickel ions.

Its subcellular location is the cytoplasm. The enzyme catalyses urea + 2 H2O + H(+) = hydrogencarbonate + 2 NH4(+). Its pathway is nitrogen metabolism; urea degradation; CO(2) and NH(3) from urea (urease route): step 1/1. The protein is Urease subunit alpha of Pseudomonas putida (strain GB-1).